Consider the following 294-residue polypeptide: Protoheme IX farnesyltransferase (294 aa).

Helical transmembrane passes span 8-28 (LTKPGIVLGNLMSSAGGFLIA), 35-55 (YSLFITMIVGTALVIASGCVL), 81-101 (IFLNQSIFYAVILSIFGFLFL), 107-127 (VLTIYLSAIGLFIYVGVYSLW), 133-153 (IYSIMVGSISGAMPPVIGYCA), 163-183 (LMLLIIFSLWQIPHSHSIAIL), 209-226 (MVVYIIGFIIATILFTVM), 230-252 (SYIFLIIISIMNLWWLHMGFYGY), and 266-286 (FLLSLIIIISLNLLLSLDHIL).

This sequence belongs to the UbiA prenyltransferase family. Protoheme IX farnesyltransferase subfamily.

Its subcellular location is the cell inner membrane. It carries out the reaction heme b + (2E,6E)-farnesyl diphosphate + H2O = Fe(II)-heme o + diphosphate. It participates in porphyrin-containing compound metabolism; heme O biosynthesis; heme O from protoheme: step 1/1. In terms of biological role, converts heme B (protoheme IX) to heme O by substitution of the vinyl group on carbon 2 of heme B porphyrin ring with a hydroxyethyl farnesyl side group. The protein is Protoheme IX farnesyltransferase of Blochmanniella pennsylvanica (strain BPEN).